The sequence spans 718 residues: Cyclomaltodextrin glucanotransferase (718 aa).

The N-terminal stretch at 1 to 34 (MFQMAKRAFLSTTLTLGLLAGSALPFLPASAAYA) is a signal peptide. The interval 35-172 (DPDIAVTNKQ…GIKIIIDFAP (138 aa)) is A1. The Ca(2+) site is built by aspartate 61, asparagine 63, asparagine 66, and asparagine 67. Cysteine 77 and cysteine 84 are oxidised to a cystine. Ca(2+)-binding residues include glycine 85 and aspartate 87. Substrate is bound at residue 134–135 (YW). Asparagine 173 contacts Ca(2+). The tract at residues 173–236 (NHTSPAMETD…NLYDLADFNH (64 aa)) is b. Position 174 (histidine 174) interacts with substrate. Residue isoleucine 224 coordinates Ca(2+). 227-230 (NLYD) contributes to the substrate binding site. Aspartate 233 is a Ca(2+) binding site. The A2 stretch occupies residues 237–440 (NNATIDKYFK…LRKSNPAIAY (204 aa)). Arginine 261 provides a ligand contact to substrate. The Nucleophile role is filled by aspartate 263. 266 to 267 (KH) contributes to the substrate binding site. Residue histidine 267 coordinates Ca(2+). Residue glutamate 291 is the Proton donor of the active site. Substrate-binding residues include histidine 361, aspartate 405, and arginine 409. The segment at 441-528 (GSTQQRWINN…ATAVWQYTAA (88 aa)) is c. Residues 529–614 (ETTPTIGHVG…SNAYNHFTIL (86 aa)) form a d region. The 81-residue stretch at 532 to 612 (PTIGHVGPVM…VNSNAYNHFT (81 aa)) folds into the IPT/TIG domain. Residues 613 to 718 (ILTGDQVTVR…GTATVTVNWQ (106 aa)) form the CBM20 domain. An e region spans residues 615-718 (TGDQVTVRFV…GTATVTVNWQ (104 aa)).

Belongs to the glycosyl hydrolase 13 family. As to quaternary structure, monomer. Requires Ca(2+) as cofactor.

The protein localises to the secreted. It catalyses the reaction Cyclizes part of a (1-&gt;4)-alpha-D-glucan chain by formation of a (1-&gt;4)-alpha-D-glucosidic bond.. This is Cyclomaltodextrin glucanotransferase (cgt) from Bacillus sp. (strain 6.6.3).